A 94-amino-acid polypeptide reads, in one-letter code: MVRTNVVSFVLFAAIVLCIGSIQIDGQKHTAPWIPEDNSICCKEHPSVGRCLPNIDDSAEKGGKCWKFCIEGCETGGFCKLFGHKHICHCNCSG.

An N-terminal signal peptide occupies residues 1 to 26 (MVRTNVVSFVLFAAIVLCIGSIQIDG). Intrachain disulfides connect cysteine 41–cysteine 92, cysteine 51–cysteine 79, cysteine 65–cysteine 88, and cysteine 69–cysteine 90.

The protein belongs to the DEFL family.

It localises to the secreted. The protein is Defensin-like protein 21 of Arabidopsis thaliana (Mouse-ear cress).